The chain runs to 285 residues: Complex I assembly factor TIMMDC1, mitochondrial (285 aa).

The next 4 helical transmembrane spans lie at 80–100 (AAVS…FIYA), 137–159 (RWSW…LTVY), 165–185 (MSHF…NLGV), and 188–208 (LVAG…LLMA). Positions 265–285 (RIEELLSLPRNPSSPHQQSKH) are disordered. The span at 274-285 (RNPSSPHQQSKH) shows a compositional bias: polar residues. Position 277 is a phosphoserine (Ser-277).

It belongs to the Tim17/Tim22/Tim23 family. Associates with the intermediate 315 kDa subcomplex of incompletely assembled complex I. Interacts with TMEM70.

It is found in the mitochondrion membrane. In terms of biological role, chaperone protein involved in the assembly of the mitochondrial NADH:ubiquinone oxidoreductase complex (complex I). Participates in constructing the membrane arm of complex I. The polypeptide is Complex I assembly factor TIMMDC1, mitochondrial (Mus musculus (Mouse)).